A 203-amino-acid chain; its full sequence is Urease accessory protein UreG (203 aa).

14–21 (GPVGSGKT) is a binding site for GTP.

Belongs to the SIMIBI class G3E GTPase family. UreG subfamily. Homodimer. UreD, UreF and UreG form a complex that acts as a GTP-hydrolysis-dependent molecular chaperone, activating the urease apoprotein by helping to assemble the nickel containing metallocenter of UreC. The UreE protein probably delivers the nickel.

It is found in the cytoplasm. Its function is as follows. Facilitates the functional incorporation of the urease nickel metallocenter. This process requires GTP hydrolysis, probably effectuated by UreG. The protein is Urease accessory protein UreG of Rhizobium rhizogenes (strain K84 / ATCC BAA-868) (Agrobacterium radiobacter).